The following is a 283-amino-acid chain: 4-diphosphocytidyl-2-C-methyl-D-erythritol kinase (283 aa).

Lys10 is an active-site residue. Position 99-109 (99-109 (PMGGGLGGGSS)) interacts with ATP. Asp141 is an active-site residue.

The protein belongs to the GHMP kinase family. IspE subfamily. As to quaternary structure, homodimer.

It carries out the reaction 4-CDP-2-C-methyl-D-erythritol + ATP = 4-CDP-2-C-methyl-D-erythritol 2-phosphate + ADP + H(+). The protein operates within isoprenoid biosynthesis; isopentenyl diphosphate biosynthesis via DXP pathway; isopentenyl diphosphate from 1-deoxy-D-xylulose 5-phosphate: step 3/6. Catalyzes the phosphorylation of the position 2 hydroxy group of 4-diphosphocytidyl-2C-methyl-D-erythritol. This is 4-diphosphocytidyl-2-C-methyl-D-erythritol kinase from Salmonella enteritidis PT4 (strain P125109).